Consider the following 300-residue polypeptide: UDP-3-O-acyl-N-acetylglucosamine deacetylase (300 aa).

Residues His-78, His-237, and Asp-241 each coordinate Zn(2+). His-264 (proton donor) is an active-site residue.

Belongs to the LpxC family. Zn(2+) is required as a cofactor.

The catalysed reaction is a UDP-3-O-[(3R)-3-hydroxyacyl]-N-acetyl-alpha-D-glucosamine + H2O = a UDP-3-O-[(3R)-3-hydroxyacyl]-alpha-D-glucosamine + acetate. It participates in glycolipid biosynthesis; lipid IV(A) biosynthesis; lipid IV(A) from (3R)-3-hydroxytetradecanoyl-[acyl-carrier-protein] and UDP-N-acetyl-alpha-D-glucosamine: step 2/6. In terms of biological role, catalyzes the hydrolysis of UDP-3-O-myristoyl-N-acetylglucosamine to form UDP-3-O-myristoylglucosamine and acetate, the committed step in lipid A biosynthesis. This Acinetobacter baumannii (strain ATCC 17978 / DSM 105126 / CIP 53.77 / LMG 1025 / NCDC KC755 / 5377) protein is UDP-3-O-acyl-N-acetylglucosamine deacetylase.